A 291-amino-acid polypeptide reads, in one-letter code: NADH-cytochrome b5 reductase 2 (291 aa).

The helical transmembrane segment at 7–23 (PIAATSVVAAAASSYYF) threads the bilayer. Residues 41–145 (DQWVDLKLKS…KGPIIKYQWQ (105 aa)) form the FAD-binding FR-type domain. 148 to 183 (LHKEITLIGAGTGITPLYQLISAINKNPEDKTKVNL) is a binding site for FAD.

It belongs to the flavoprotein pyridine nucleotide cytochrome reductase family. It depends on FAD as a cofactor.

The protein resides in the mitochondrion outer membrane. The enzyme catalyses 2 Fe(III)-[cytochrome b5] + NADH = 2 Fe(II)-[cytochrome b5] + NAD(+) + H(+). May mediate the reduction of outer membrane cytochrome b5. The protein is NADH-cytochrome b5 reductase 2 (MCR1) of Yarrowia lipolytica (strain CLIB 122 / E 150) (Yeast).